Here is a 373-residue protein sequence, read N- to C-terminus: 3 beta-hydroxysteroid dehydrogenase/Delta 5--&gt;4-isomerase type 1 (373 aa).

Residues 10 to 15 (GAGGFL), Tyr155, and Lys159 each bind NADP(+). Lys159 acts as the Proton donor in catalysis. The helical transmembrane segment at 288 to 308 (LSLMYWIGFLLEIVSFLLRPI) threads the bilayer.

The protein belongs to the 3-beta-HSD family. As to expression, placenta and skin. Predominantly expressed in mammary gland tissue.

The protein localises to the endoplasmic reticulum membrane. It is found in the mitochondrion membrane. The catalysed reaction is a 3beta-hydroxy-Delta(5)-steroid + NAD(+) = a 3-oxo-Delta(5)-steroid + NADH + H(+). It catalyses the reaction pregnenolone + NAD(+) = pregn-5-ene-3,20-dione + NADH + H(+). It carries out the reaction 3beta-hydroxyandrost-5-en-17-one + NAD(+) = androst-5-ene-3,17-dione + NADH + H(+). The enzyme catalyses androst-5-en-3beta,17beta-diol + NAD(+) = 17beta-hydroxy-androst-5-en-3-one + NADH + H(+). The catalysed reaction is a 3beta-hydroxysteroid + NADP(+) = a 3-oxosteroid + NADPH + H(+). It catalyses the reaction 5alpha-androstane-3beta,17beta-diol + NADP(+) = 17beta-hydroxy-5alpha-androstan-3-one + NADPH + H(+). It carries out the reaction 3beta-hydroxy-5alpha-androstan-17-one + NADP(+) = 5alpha-androstan-3,17-dione + NADPH + H(+). The enzyme catalyses a 3-oxo-Delta(5)-steroid = a 3-oxo-Delta(4)-steroid. The catalysed reaction is pregn-5-ene-3,20-dione = progesterone. It catalyses the reaction androst-5-ene-3,17-dione = androst-4-ene-3,17-dione. It carries out the reaction 17beta-hydroxy-androst-5-en-3-one = testosterone. The enzyme catalyses 5alpha-androstane-3beta,17beta-diol + NAD(+) = 17beta-hydroxy-5alpha-androstan-3-one + NADH + H(+). It participates in steroid hormone biosynthesis. The protein operates within steroid metabolism. Functionally, a bifunctional enzyme responsible for the oxidation and isomerization of 3beta-hydroxy-Delta(5)-steroid precursors to 3-oxo-Delta(4)-steroids, an essential step in steroid hormone biosynthesis. Specifically catalyzes the conversion of pregnenolone to progesterone, 17alpha-hydroxypregnenolone to 17alpha-hydroxyprogesterone, dehydroepiandrosterone (DHEA) to 4-androstenedione, and androstenediol to testosterone. Additionally, catalyzes the interconversion between 3beta-hydroxy and 3-oxo-5alpha-androstane steroids controlling the bioavalability of the active forms. Specifically converts dihydrotestosterone to its inactive form 5alpha-androstanediol, that does not bind androgen receptor/AR. Also converts androstanedione, a precursor of testosterone and estrone, to epiandrosterone. Expected to use NAD(+) as preferred electron donor for the 3beta-hydroxy-steroid dehydrogenase activity and NADPH for the 3-ketosteroid reductase activity. The chain is 3 beta-hydroxysteroid dehydrogenase/Delta 5--&gt;4-isomerase type 1 from Homo sapiens (Human).